The primary structure comprises 318 residues: MRIVFMGTPDFAVPSLQRIASENHDFEIVLVVTGRDKPRRKKNALPEPTPVKQSALELGLPVYETDDPSSAEFASVVLASRPDVIVVAAFRILPPAVFSIARLGAFNLHASLLPAYRGAAPINWAIIRGEKVTGVTTFFLQEKVDTGSMILTENVTIAEDDNATRLAEKLSVKGAALVVETLHLINAGNVSVKKQDDSLASKAPKLTKENTRIRWNSRSAELCDFIRGLAMKPAAWTTMDGKTLKVYKAVPLESPISLPERGREPGLVYIDDSRLLVGTVDGWISLQQLQLEGKKIMEAQEFLRGFRYENREQPLLLL.

Position 111-114 (111-114 (SLLP)) interacts with (6S)-5,6,7,8-tetrahydrofolate.

Belongs to the Fmt family.

The catalysed reaction is L-methionyl-tRNA(fMet) + (6R)-10-formyltetrahydrofolate = N-formyl-L-methionyl-tRNA(fMet) + (6S)-5,6,7,8-tetrahydrofolate + H(+). Functionally, attaches a formyl group to the free amino group of methionyl-tRNA(fMet). The formyl group appears to play a dual role in the initiator identity of N-formylmethionyl-tRNA by promoting its recognition by IF2 and preventing the misappropriation of this tRNA by the elongation apparatus. This is Methionyl-tRNA formyltransferase from Chlorobium limicola (strain DSM 245 / NBRC 103803 / 6330).